The chain runs to 205 residues: Gap junction epsilon-1 protein (205 aa).

Topologically, residues 1–23 (MSLNYIKNFYEGCVKPPTVIGQF) are cytoplasmic. Residues 24–44 (HTLFFGSIRIFFLGVLGFAVY) form a helical membrane-spanning segment. Topologically, residues 45–76 (GNEALHFICDPDKREVNLFCYNQFRPITPQVS) are extracellular. Cystine bridges form between Cys53-Cys161 and Cys64-Cys148. A helical transmembrane segment spans residues 77–97 (FSALQLVIVLVPGALFHLYAA). The Cytoplasmic portion of the chain corresponds to 98–112 (CKSINQECILQKPIY). Residues 113-133 (TIIYILSVLLRISLAAIAFWL) form a helical membrane-spanning segment. Residues 134 to 170 (QIYLFGFQVKSLYLCDARSLGENMIIRCMVPEHFEKT) are Extracellular-facing. Residues 171 to 191 (IFLIAINTFTTITILLFVAEI) traverse the membrane as a helical segment. Over 192 to 205 (FEIIFRRLYFPFRQ) the chain is Cytoplasmic.

The protein belongs to the connexin family. Beta-type (group I) subfamily. A connexon is composed of a hexamer of connexins. As to expression, not detected in lens or retina.

It localises to the cell membrane. In terms of biological role, mediates calcium-independent ATP release, suggesting activity as a hemichannel. Does not form functional gap junctions. The sequence is that of Gap junction epsilon-1 protein (GJE1) from Homo sapiens (Human).